The primary structure comprises 172 residues: Avenin-like a4 (172 aa).

The N-terminal stretch at 1-19 (MKTMFILALIALAATSVVA) is a signal peptide.

Belongs to the prolamin family. Contains 7 disulfide bonds.

Seed storage protein. Not integrated in the gluten polymer through disulfide bonds, unless incorporated by reduction and reoxidation during dough making. Increases dough strength and bread volume, but decreases dough stability when added into a base wheat flour. The sequence is that of Avenin-like a4 from Triticum aestivum (Wheat).